Reading from the N-terminus, the 146-residue chain is Ecotin-like protein 1 (146 aa).

The protein belongs to the protease inhibitor I11 (ecotin) family.

This Leishmania braziliensis protein is Ecotin-like protein 1 (ISP1).